We begin with the raw amino-acid sequence, 115 residues long: Evasin P1182 (115 aa).

The N-terminal stretch at 1–26 (MALNWSFRVIFVSTMWCALLKFATLG) is a signal peptide. Cystine bridges form between C38/C58, C54/C94, C70/C99, and C89/C108. N45, N72, and N103 each carry an N-linked (GlcNAc...) asparagine glycan.

It localises to the secreted. Salivary chemokine-binding protein which binds to host chemokines CCL2, CCL3, CCL4, CCL8 and CCL18. This is Evasin P1182 from Amblyomma maculatum (Gulf Coast tick).